Here is a 453-residue protein sequence, read N- to C-terminus: Aldehyde dehydrogenase, dimeric NADP-preferring (453 aa).

At serine 2 the chain carries N-acetylserine. Lysine 178 bears the N6-acetyllysine mark. 188–193 (GSTAVG) provides a ligand contact to NAD(+). An N6-acetyllysine modification is found at lysine 194. Catalysis depends on residues glutamate 210 and cysteine 244.

This sequence belongs to the aldehyde dehydrogenase family. As to quaternary structure, homodimer.

It is found in the cytoplasm. It catalyses the reaction an aldehyde + NAD(+) + H2O = a carboxylate + NADH + 2 H(+). The catalysed reaction is octanal + NAD(+) + H2O = octanoate + NADH + 2 H(+). In terms of biological role, ALDHs play a major role in the detoxification of alcohol-derived acetaldehyde. They are involved in the metabolism of corticosteroids, biogenic amines, neurotransmitters, and lipid peroxidation. Oxidizes medium and long chain aldehydes into non-toxic fatty acids. Preferentially oxidizes aromatic aldehyde substrates. Comprises about 50 percent of corneal epithelial soluble proteins. May play a role in preventing corneal damage caused by ultraviolet light. In Rattus norvegicus (Rat), this protein is Aldehyde dehydrogenase, dimeric NADP-preferring (Aldh3a1).